Consider the following 302-residue polypeptide: Glutaminase (302 aa).

7 residues coordinate substrate: Ser-61, Asn-111, Glu-155, Asn-162, Tyr-186, Tyr-238, and Val-256.

Belongs to the glutaminase family. As to quaternary structure, homotetramer.

The catalysed reaction is L-glutamine + H2O = L-glutamate + NH4(+). In Ectopseudomonas mendocina (strain ymp) (Pseudomonas mendocina), this protein is Glutaminase.